Consider the following 282-residue polypeptide: Probable endonuclease 4 (282 aa).

Positions 69, 109, 145, 179, 182, 216, 229, 231, and 261 each coordinate Zn(2+).

This sequence belongs to the AP endonuclease 2 family. Requires Zn(2+) as cofactor.

It carries out the reaction Endonucleolytic cleavage to 5'-phosphooligonucleotide end-products.. Its function is as follows. Endonuclease IV plays a role in DNA repair. It cleaves phosphodiester bonds at apurinic or apyrimidinic (AP) sites, generating a 3'-hydroxyl group and a 5'-terminal sugar phosphate. The chain is Probable endonuclease 4 from Campylobacter hominis (strain ATCC BAA-381 / DSM 21671 / CCUG 45161 / LMG 19568 / NCTC 13146 / CH001A).